Reading from the N-terminus, the 335-residue chain is SAM pointed domain-containing Ets transcription factor (335 aa).

Residues 1–20 (MGSASPGLSSVSPSHLLLPP) show a composition bias toward low complexity. Disordered regions lie at residues 1-25 (MGSA…TVSR) and 75-100 (AKAP…DSQA). Residues 129–213 (EVLKDIETAC…AHLDIWKSAA (85 aa)) enclose the PNT domain. Residues 249–332 (IHLWQFLKEL…ISQRLVYQFV (84 aa)) constitute a DNA-binding region (ETS).

It belongs to the ETS family. Interacts with the DNA-binding domain of the androgen receptor. Interacts with NKX3-1. In terms of tissue distribution, expressed in a very restricted set of primarily hormone-regulated epithelial tissues with particularly high expression in the prostate gland. Significantly lower expression is seen in other hormone regulated tissues such as mammary gland, salivary gland, and ovary. Expressed in prostate carcinoma cells.

It is found in the nucleus. Its function is as follows. May function as an androgen-independent transactivator of the prostate-specific antigen (PSA) promoter. Binds to 5'-GGAT-3' DNA sequences. May play a role in the regulation of the prostate gland and/or prostate cancer development. Acts as a transcriptional activator for SERPINB5 promoter. In Homo sapiens (Human), this protein is SAM pointed domain-containing Ets transcription factor (SPDEF).